The sequence spans 144 residues: 3-dehydroquinate dehydratase (144 aa).

Catalysis depends on Tyr-23, which acts as the Proton acceptor. 3 residues coordinate substrate: Asn-74, His-80, and Asp-87. Residue His-100 is the Proton donor of the active site. Substrate is bound by residues 101-102 and Arg-111; that span reads LS.

Belongs to the type-II 3-dehydroquinase family. Homododecamer.

It carries out the reaction 3-dehydroquinate = 3-dehydroshikimate + H2O. It functions in the pathway metabolic intermediate biosynthesis; chorismate biosynthesis; chorismate from D-erythrose 4-phosphate and phosphoenolpyruvate: step 3/7. In terms of biological role, catalyzes a trans-dehydration via an enolate intermediate. In Haemophilus ducreyi (strain 35000HP / ATCC 700724), this protein is 3-dehydroquinate dehydratase.